Consider the following 253-residue polypeptide: MSWIPFKIGQPKKQIVSKTVERDFEREYGKLQQLEEQTKRLQKDMKKSTDADLAMSKSAVKISLDLLSNPLCEQDQDFLRMVTALDTAMKRMDAFNQEKVNQIQKTVIEPLKKFGSIFPSLNMAVKRREQALQDYGRLQAKVEKYEEKEKTGPVLAKLHQAREELRPVREDFEAKNKQLLDEMPRFYNSRLDYFQPSFESLIRAQVIYYSEMHKIFGDLTQQLDQPGHSDEHRERENETKLSELRALSIVADD.

The 224-residue stretch at 9-232 folds into the BAR domain; sequence GQPKKQIVSK…LDQPGHSDEH (224 aa). Coiled coils occupy residues 16 to 57 and 120 to 151; these read VSKT…AMSK and SLNM…KEKT.

It is found in the cytoplasm. It localises to the cytoskeleton. Functionally, involved in cytokinesis and septation where it has a role in the localization of F-actin. In Rattus norvegicus (Rat), this protein is Bridging integrator 3 (Bin3).